The sequence spans 219 residues: Germin-like protein subfamily 2 member 3 (219 aa).

Residues 1-22 (MATSMIPIFVTFMLVAAHMALA) form the signal peptide. An intrachain disulfide couples Cys-31 to Cys-46. Positions 60–209 (IGLATAAATA…AFGAAAPEIQ (150 aa)) constitute a Cupin type-1 domain. Asn-70 carries an N-linked (GlcNAc...) asparagine glycan. The Mn(2+) site is built by His-109, His-111, Glu-116, and His-155.

Belongs to the germin family. Oligomer (believed to be a pentamer but probably hexamer).

Its subcellular location is the secreted. It localises to the extracellular space. The protein resides in the apoplast. May play a role in plant defense. Probably has no oxalate oxidase activity even if the active site is conserved. In Arabidopsis thaliana (Mouse-ear cress), this protein is Germin-like protein subfamily 2 member 3 (GLP8).